The following is an 838-amino-acid chain: Kinesin-like protein KIFC2 (838 aa).

Over residues alanine 23 to alanine 32 the composition is skewed to low complexity. Disordered stretches follow at residues alanine 23 to alanine 48 and leucine 140 to proline 185. A compositionally biased stretch (polar residues) spans aspartate 156–histidine 167. The stretch at leucine 186–arginine 351 forms a coiled coil. The Kinesin motor domain occupies asparagine 409–isoleucine 740. Glycine 484–threonine 491 provides a ligand contact to ATP. The disordered stretch occupies residues arginine 718–arginine 792.

Belongs to the TRAFAC class myosin-kinesin ATPase superfamily. Kinesin family.

Its subcellular location is the cytoplasm. It is found in the cytoskeleton. In terms of biological role, may play a role in microtubule-dependent retrograde axonal transport. May function as the motor for the transport of multivesicular body (MVB)-like organelles in dendrites. The protein is Kinesin-like protein KIFC2 (KIFC2) of Homo sapiens (Human).